Consider the following 301-residue polypeptide: Acetylglutamate kinase (301 aa).

Residues 68-69 (GG), Arg-90, and Asn-195 each bind substrate.

Belongs to the acetylglutamate kinase family. ArgB subfamily.

The protein localises to the cytoplasm. The enzyme catalyses N-acetyl-L-glutamate + ATP = N-acetyl-L-glutamyl 5-phosphate + ADP. It functions in the pathway amino-acid biosynthesis; L-arginine biosynthesis; N(2)-acetyl-L-ornithine from L-glutamate: step 2/4. Its function is as follows. Catalyzes the ATP-dependent phosphorylation of N-acetyl-L-glutamate. This is Acetylglutamate kinase from Pseudomonas fluorescens (strain ATCC BAA-477 / NRRL B-23932 / Pf-5).